The chain runs to 295 residues: 4-hydroxy-tetrahydrodipicolinate synthase (295 aa).

Threonine 47 provides a ligand contact to pyruvate. The Proton donor/acceptor role is filled by tyrosine 135. The active-site Schiff-base intermediate with substrate is lysine 163. Residue isoleucine 204 coordinates pyruvate.

Belongs to the DapA family. As to quaternary structure, homotetramer; dimer of dimers.

The protein localises to the cytoplasm. It catalyses the reaction L-aspartate 4-semialdehyde + pyruvate = (2S,4S)-4-hydroxy-2,3,4,5-tetrahydrodipicolinate + H2O + H(+). The protein operates within amino-acid biosynthesis; L-lysine biosynthesis via DAP pathway; (S)-tetrahydrodipicolinate from L-aspartate: step 3/4. Its function is as follows. Catalyzes the condensation of (S)-aspartate-beta-semialdehyde [(S)-ASA] and pyruvate to 4-hydroxy-tetrahydrodipicolinate (HTPA). This Caldicellulosiruptor saccharolyticus (strain ATCC 43494 / DSM 8903 / Tp8T 6331) protein is 4-hydroxy-tetrahydrodipicolinate synthase.